The chain runs to 141 residues: Large ribosomal subunit protein uL11 (141 aa).

It belongs to the universal ribosomal protein uL11 family. In terms of assembly, part of the ribosomal stalk of the 50S ribosomal subunit. Interacts with L10 and the large rRNA to form the base of the stalk. L10 forms an elongated spine to which L12 dimers bind in a sequential fashion forming a multimeric L10(L12)X complex. Post-translationally, one or more lysine residues are methylated.

Its function is as follows. Forms part of the ribosomal stalk which helps the ribosome interact with GTP-bound translation factors. This is Large ribosomal subunit protein uL11 from Agathobacter rectalis (strain ATCC 33656 / DSM 3377 / JCM 17463 / KCTC 5835 / VPI 0990) (Eubacterium rectale).